A 764-amino-acid polypeptide reads, in one-letter code: Tyrosine-protein phosphatase corkscrew (764 aa).

Residues 1 to 95 (WFHGNLSGKE…GTVVHLRQPF (95 aa)) form the SH2 domain. In terms of domain architecture, Tyrosine-protein phosphatase spans 117 to 522 (FWEEFESLQQ…KFVYYAVQHY (406 aa)). Residues 174-325 (IRLPTDGDLY…LNGEGNQFKT (152 aa)) are PTPase insert (Cys/Ser-rich). The interval 246–273 (SKHKRSESMSASANASAAGTGPGTPTAA) is disordered. The span at 255 to 273 (SASANASAAGTGPGTPTAA) shows a compositional bias: low complexity. Substrate contacts are provided by residues Asp-422, 460-466 (CSAGIGR), and Gln-507. The Phosphocysteine intermediate role is filled by Cys-460. Residues 599 to 666 (AAKLQPPLPP…NANGNGNILG (68 aa)) are disordered. The span at 612–666 (SNNNNSSGNSGSYCNSSSSTSTAQHNGVVSSSNNCSSGSGSANSSNANGNGNILG) shows a compositional bias: low complexity.

This sequence belongs to the protein-tyrosine phosphatase family. Non-receptor class subfamily.

The protein localises to the cytoplasm. The enzyme catalyses O-phospho-L-tyrosyl-[protein] + H2O = L-tyrosyl-[protein] + phosphate. Its function is as follows. Required in all receptor tyrosine kinase signaling pathways. Functions downstream of the receptor tyrosine kinase torso, acting in concert with D-Raf via tailless. Also functions downstream of Egfr (epidermal growth factor receptor) and btl (fibroblast growth factor receptor). The SH2 domain suggests that csw effects its role by mediating heteromeric protein interactions. Maternally required for normal determination of cell fates at the termini of the embryo. Required for cell fate specification of the ventral ectoderm, in the developing embryonic CNS and for embryonic tracheal cell migration. Functions during imaginal development for proper formation of adult structures such as eyes, aristae, L5 wing vein and the tarsal claw. The polypeptide is Tyrosine-protein phosphatase corkscrew (csw) (Drosophila virilis (Fruit fly)).